Reading from the N-terminus, the 582-residue chain is Probable DNA ligase (582 aa).

E243 contributes to the ATP binding site. The N6-AMP-lysine intermediate role is filled by K245. Residues R250, R265, E295, F335, R410, and K416 each contribute to the ATP site.

It belongs to the ATP-dependent DNA ligase family. Mg(2+) serves as cofactor.

It catalyses the reaction ATP + (deoxyribonucleotide)n-3'-hydroxyl + 5'-phospho-(deoxyribonucleotide)m = (deoxyribonucleotide)n+m + AMP + diphosphate.. Functionally, DNA ligase that seals nicks in double-stranded DNA during DNA replication, DNA recombination and DNA repair. The polypeptide is Probable DNA ligase (Dictyoglomus thermophilum (strain ATCC 35947 / DSM 3960 / H-6-12)).